Reading from the N-terminus, the 142-residue chain is Peptide methionine sulfoxide reductase MsrB (142 aa).

The MsrB domain occupies 2-125 (LKKDKSELTD…NSAAIQFIPY (124 aa)). The active-site Nucleophile is cysteine 114.

Belongs to the MsrB Met sulfoxide reductase family.

The catalysed reaction is L-methionyl-[protein] + [thioredoxin]-disulfide + H2O = L-methionyl-(R)-S-oxide-[protein] + [thioredoxin]-dithiol. In Staphylococcus aureus (strain bovine RF122 / ET3-1), this protein is Peptide methionine sulfoxide reductase MsrB.